Reading from the N-terminus, the 243-residue chain is ATP-dependent dethiobiotin synthetase BioD (243 aa).

12 to 17 lines the ATP pocket; that stretch reads DVGKTL. Thr-16 contributes to the Mg(2+) binding site. Lys-37 is an active-site residue. Ser-41 serves as a coordination point for substrate. ATP-binding positions include Asp-54, 115 to 118, and 179 to 180; these read EGCG and NM. Residues Asp-54 and Glu-115 each contribute to the Mg(2+) site.

The protein belongs to the dethiobiotin synthetase family. As to quaternary structure, homodimer. Mg(2+) is required as a cofactor.

The protein localises to the cytoplasm. The catalysed reaction is (7R,8S)-7,8-diammoniononanoate + CO2 + ATP = (4R,5S)-dethiobiotin + ADP + phosphate + 3 H(+). It participates in cofactor biosynthesis; biotin biosynthesis; biotin from 7,8-diaminononanoate: step 1/2. In terms of biological role, catalyzes a mechanistically unusual reaction, the ATP-dependent insertion of CO2 between the N7 and N8 nitrogen atoms of 7,8-diaminopelargonic acid (DAPA, also called 7,8-diammoniononanoate) to form a ureido ring. The protein is ATP-dependent dethiobiotin synthetase BioD of Caldicellulosiruptor saccharolyticus (strain ATCC 43494 / DSM 8903 / Tp8T 6331).